A 367-amino-acid chain; its full sequence is Alanine racemase (367 aa).

The active-site Proton acceptor; specific for D-alanine is the lysine 35. N6-(pyridoxal phosphate)lysine is present on lysine 35. Position 130 (arginine 130) interacts with substrate. Residue tyrosine 256 is the Proton acceptor; specific for L-alanine of the active site. Position 304 (methionine 304) interacts with substrate.

It belongs to the alanine racemase family. The cofactor is pyridoxal 5'-phosphate.

It catalyses the reaction L-alanine = D-alanine. It functions in the pathway amino-acid biosynthesis; D-alanine biosynthesis; D-alanine from L-alanine: step 1/1. Catalyzes the interconversion of L-alanine and D-alanine. May also act on other amino acids. This Methylibium petroleiphilum (strain ATCC BAA-1232 / LMG 22953 / PM1) protein is Alanine racemase (alr).